A 576-amino-acid chain; its full sequence is Glucoamylase ARB_02327-1 (576 aa).

The N-terminal stretch at 1-20 (MGLASTVSLALLGLCSLARA) is a signal peptide. Tryptophan 141 provides a ligand contact to substrate. 2 N-linked (GlcNAc...) asparagine glycosylation sites follow: asparagine 168 and asparagine 192. Aspartate 197 (proton acceptor) is an active-site residue. Glutamate 200 acts as the Proton donor in catalysis. 2 disulfides stabilise this stretch: cysteine 243/cysteine 470 and cysteine 285/cysteine 293. In terms of domain architecture, CBM20 spans 477–576 (GSGGDTVAVT…GSFTQNDTWR (100 aa)). The tract at residues 552 to 576 (TWESDPNRSITTSASGSFTQNDTWR) is disordered. Asparagine 558 and asparagine 572 each carry an N-linked (GlcNAc...) asparagine glycan.

Belongs to the glycosyl hydrolase 15 family.

The protein localises to the secreted. The catalysed reaction is Hydrolysis of terminal (1-&gt;4)-linked alpha-D-glucose residues successively from non-reducing ends of the chains with release of beta-D-glucose.. This is Glucoamylase ARB_02327-1 from Schizophyllum commune (strain H4-8 / FGSC 9210) (Split gill fungus).